The chain runs to 129 residues: Small ribosomal subunit protein uS11 (129 aa).

This sequence belongs to the universal ribosomal protein uS11 family. In terms of assembly, part of the 30S ribosomal subunit. Interacts with proteins S7 and S18. Binds to IF-3.

In terms of biological role, located on the platform of the 30S subunit, it bridges several disparate RNA helices of the 16S rRNA. Forms part of the Shine-Dalgarno cleft in the 70S ribosome. This Phocaeicola vulgatus (strain ATCC 8482 / DSM 1447 / JCM 5826 / CCUG 4940 / NBRC 14291 / NCTC 11154) (Bacteroides vulgatus) protein is Small ribosomal subunit protein uS11.